Consider the following 362-residue polypeptide: 3-isopropylmalate dehydrogenase (362 aa).

76 to 87 (GPKWGTGSVRPE) is a binding site for NAD(+). 4 residues coordinate substrate: Arg-94, Arg-104, Arg-133, and Asp-222. The Mg(2+) site is built by Asp-222, Asp-247, and Asp-251. Position 286 to 297 (286 to 297 (GSAPDLGPGKVN)) interacts with NAD(+).

It belongs to the isocitrate and isopropylmalate dehydrogenases family. As to quaternary structure, homodimer. The cofactor is Mg(2+). Mn(2+) is required as a cofactor.

It is found in the cytoplasm. It carries out the reaction (2R,3S)-3-isopropylmalate + NAD(+) = 4-methyl-2-oxopentanoate + CO2 + NADH. The protein operates within amino-acid biosynthesis; L-leucine biosynthesis; L-leucine from 3-methyl-2-oxobutanoate: step 3/4. In terms of biological role, catalyzes the oxidation of 3-carboxy-2-hydroxy-4-methylpentanoate (3-isopropylmalate) to 3-carboxy-4-methyl-2-oxopentanoate. The product decarboxylates to 4-methyl-2 oxopentanoate. This Pichia angusta (Yeast) protein is 3-isopropylmalate dehydrogenase (LEU2).